A 333-amino-acid polypeptide reads, in one-letter code: Ferrochelatase (333 aa).

Fe cation is bound by residues His202 and Glu284.

It belongs to the ferrochelatase family.

It localises to the cytoplasm. It catalyses the reaction heme b + 2 H(+) = protoporphyrin IX + Fe(2+). It participates in porphyrin-containing compound metabolism; protoheme biosynthesis; protoheme from protoporphyrin-IX: step 1/1. Its function is as follows. Catalyzes the ferrous insertion into protoporphyrin IX. This Francisella tularensis subsp. novicida (strain U112) protein is Ferrochelatase.